The following is a 119-amino-acid chain: Protein phosphatase EYA1 (119 aa).

It belongs to the HAD-like hydrolase superfamily. EYA family. It depends on Mg(2+) as a cofactor.

Its subcellular location is the cytoplasm. The protein resides in the nucleus. It carries out the reaction O-phospho-L-tyrosyl-[protein] + H2O = L-tyrosyl-[protein] + phosphate. The catalysed reaction is O-phospho-L-seryl-[protein] + H2O = L-seryl-[protein] + phosphate. The enzyme catalyses O-phospho-L-threonyl-[protein] + H2O = L-threonyl-[protein] + phosphate. In terms of biological role, functions both as protein phosphatase and as transcriptional coactivator for SIX1, and probably also for other transcription factors of this family. Tyrosine phosphatase that dephosphorylates 'Tyr-142' of histone H2AX (H2AXY142ph) and promotes efficient DNA repair via the recruitment of DNA repair complexes containing MDC1. 'Tyr-142' phosphorylation of histone H2AX plays a central role in DNA repair and acts as a mark that distinguishes between apoptotic and repair responses to genotoxic stress. Its function as histone phosphatase may contribute to its function in transcription regulation during organogenesis. Also has phosphatase activity with proteins phosphorylated on Ser and Thr residues (in vitro). Required for normal embryonic development of the skeleton, kidneys and ears. The sequence is that of Protein phosphatase EYA1 (EYA1) from Gallus gallus (Chicken).